The following is a 537-amino-acid chain: Phosphoenolpyruvate carboxykinase (ATP) (537 aa).

R61, Y195, and K201 together coordinate substrate. Residues K201, H220, and 236–244 (GLSGTGKTT) contribute to the ATP site. K201 and H220 together coordinate Mn(2+). Residue D257 participates in Mn(2+) binding. ATP is bound by residues E285, R323, and T448. Position 323 (R323) interacts with substrate.

The protein belongs to the phosphoenolpyruvate carboxykinase (ATP) family. Requires Mn(2+) as cofactor.

It localises to the cytoplasm. It catalyses the reaction oxaloacetate + ATP = phosphoenolpyruvate + ADP + CO2. Its pathway is carbohydrate biosynthesis; gluconeogenesis. Its function is as follows. Involved in the gluconeogenesis. Catalyzes the conversion of oxaloacetate (OAA) to phosphoenolpyruvate (PEP) through direct phosphoryl transfer between the nucleoside triphosphate and OAA. The protein is Phosphoenolpyruvate carboxykinase (ATP) of Rhodopseudomonas palustris (strain BisA53).